A 681-amino-acid polypeptide reads, in one-letter code: PTS system glucose-specific EIICBA component (681 aa).

Residues 3 to 414 (KKLFGQLQRI…LKYKTPGRED (412 aa)) enclose the PTS EIIC type-1 domain. 10 helical membrane passes run 16-36 (LMLPVAILPAAGLLLAIGTAI), 73-93 (MIFALGVAIGLAGGDGVAAIA), 126-146 (ILGIPTLQTGVFGGIIIGALA), 170-190 (FVPIMMATTSFILAFPMALIW), 199-219 (AFSTGLLDSNTGVAVFLFGFI), 273-293 (FMQGEFPVMMFGLPAAALAIY), 303-323 (VVAGLMGSAALTSFLTGITEP), 328-348 (FLFVAPLLFFIHAVLDGLSFL), 355-375 (VHLGYTFSGGFIDYVLLGVLP), and 383-403 (VIPVGLVYAVIYYFVFRFLIV). One can recognise a PTS EIIB type-1 domain in the interval 425 to 506 (TELPYAVLEA…QQIMNGQVVE (82 aa)). Catalysis depends on C447, which acts as the Phosphocysteine intermediate; for EIIB activity. The region spanning 551-655 (DQVFSEKMMG…SDITPIIVTQ (105 aa)) is the PTS EIIA type-1 domain. H603 (tele-phosphohistidine intermediate; for EIIA activity) is an active-site residue.

It is found in the cell membrane. It carries out the reaction N(pros)-phospho-L-histidyl-[protein] + D-glucose(out) = D-glucose 6-phosphate(in) + L-histidyl-[protein]. Functionally, the phosphoenolpyruvate-dependent sugar phosphotransferase system (sugar PTS), a major carbohydrate active transport system, catalyzes the phosphorylation of incoming sugar substrates concomitantly with their translocation across the cell membrane. This system is involved in glucose transport. This Staphylococcus aureus (strain JH9) protein is PTS system glucose-specific EIICBA component (ptsG).